The following is a 131-amino-acid chain: Profilin-5 (131 aa).

The cysteines at positions 13 and 115 are disulfide-linked. The short motif at 81 to 97 (AVIRGKKGAGGITIKKT) is the Involved in PIP2 interaction element. Thr-111 carries the post-translational modification Phosphothreonine.

Belongs to the profilin family. In terms of assembly, occurs in many kinds of cells as a complex with monomeric actin in a 1:1 ratio. In terms of processing, phosphorylated by MAP kinases.

It is found in the cytoplasm. The protein resides in the cytoskeleton. Functionally, binds to actin and affects the structure of the cytoskeleton. At high concentrations, profilin prevents the polymerization of actin, whereas it enhances it at low concentrations. The chain is Profilin-5 from Phleum pratense (Common timothy).